Reading from the N-terminus, the 346-residue chain is Glucose-6-phosphatase 3 (346 aa).

The Lumenal segment spans residues Met1–Asn24. The chain crosses the membrane as a helical span at residues Met25–Ala45. At Ala46 to Ser56 the chain is on the cytoplasmic side. The helical transmembrane segment at Val57–Gly77 threads the bilayer. Residues Asp78–Pro108 lie on the Lumenal side of the membrane. Arg79 is a substrate binding site. Residues Gly109–Ile129 form a helical membrane-spanning segment. The active-site Proton donor is the His114. Residues Ser130 to Arg138 are Cytoplasmic-facing. A helical transmembrane segment spans residues Ser139–Leu159. At Ser160–His167 the chain is on the lumenal side. Position 161 (Arg161) interacts with substrate. His167 functions as the Nucleophile in the catalytic mechanism. A helical membrane pass occupies residues Phe168 to Met186. At Ser187–Ser197 the chain is on the cytoplasmic side. A helical membrane pass occupies residues Phe198–Phe218. The Lumenal segment spans residues Thr219–Asp254. The helical transmembrane segment at Ser255–Ile273 threads the bilayer. Topologically, residues Arg274–Lys283 are cytoplasmic. The helical transmembrane segment at Ile284 to Pro304 threads the bilayer. Residues Gln305–Ser307 lie on the Lumenal side of the membrane. A helical membrane pass occupies residues Leu308–Val328. At Pro329–Ser346 the chain is on the cytoplasmic side.

It belongs to the glucose-6-phosphatase family. As to expression, widely expressed. Highly expressed in heart and testis and to a lower extent in spleen, stomach, small intestine, skeletal muscle and uterus. Expressed in muscle, brain, thymus, lung, kidney, spleen and pancreas (at protein level). In the brain, expressed in astrocytes (at protein level).

The protein resides in the endoplasmic reticulum membrane. It catalyses the reaction D-glucose 6-phosphate + H2O = D-glucose + phosphate. It functions in the pathway carbohydrate biosynthesis; gluconeogenesis. Its activity is regulated as follows. Inhibited by vanadate. Hydrolyzes glucose-6-phosphate to glucose in the endoplasmic reticulum. May form with the glucose-6-phosphate transporter (SLC37A4/G6PT) a ubiquitously expressed complex responsible for glucose production through glycogenolysis and gluconeogenesis. Probably required for normal neutrophil function. The protein is Glucose-6-phosphatase 3 (G6pc3) of Mus musculus (Mouse).